A 669-amino-acid chain; its full sequence is Armadillo repeat-containing protein gudu (669 aa).

The span at 1 to 10 shows a compositional bias: polar residues; that stretch reads MIGTSSGTSH. Residues 1 to 53 are disordered; it reads MIGTSSGTSHNRSRKKKEQCGSCPNRFSKDKRQVAAEDSDTTEVESSTDEEER. Positions 37 to 51 are enriched in acidic residues; it reads EDSDTTEVESSTDEE. ARM repeat units follow at residues 100–139, 141–180, 240–279, 281–320, 322–365, 367–406, 408–447, 492–531, 574–613, and 615–654; these read QINQ…DITL, IDIR…NVCK, KHNM…KCSS, PKFQ…KCAF, GTTR…MCAV, DANV…ECVR, QSNR…ECAE, DSAE…TIAQ, GNNT…KLSM, and PQNC…NIRE.

Highly expressed in testis.

Important for spermatogenesis where it may have a role in sperm individualization. The chain is Armadillo repeat-containing protein gudu from Drosophila melanogaster (Fruit fly).